The primary structure comprises 334 residues: Transaldolase (334 aa).

Ser-2 carries the N-acetylserine modification. The Schiff-base intermediate with substrate role is filled by Lys-143.

It belongs to the transaldolase family. Type 1 subfamily. In terms of assembly, homodimer.

It catalyses the reaction D-sedoheptulose 7-phosphate + D-glyceraldehyde 3-phosphate = D-erythrose 4-phosphate + beta-D-fructose 6-phosphate. The protein operates within carbohydrate degradation; pentose phosphate pathway; D-glyceraldehyde 3-phosphate and beta-D-fructose 6-phosphate from D-ribose 5-phosphate and D-xylulose 5-phosphate (non-oxidative stage): step 2/3. Transaldolase is important for the balance of metabolites in the pentose-phosphate pathway. The sequence is that of Transaldolase (TAL1) from Kluyveromyces lactis (strain ATCC 8585 / CBS 2359 / DSM 70799 / NBRC 1267 / NRRL Y-1140 / WM37) (Yeast).